The chain runs to 126 residues: DNA-directed RNA polymerase subunit omega (126 aa).

This sequence belongs to the RNA polymerase subunit omega family. In terms of assembly, the RNAP catalytic core consists of 2 alpha, 1 beta, 1 beta' and 1 omega subunit. When a sigma factor is associated with the core the holoenzyme is formed, which can initiate transcription.

It catalyses the reaction RNA(n) + a ribonucleoside 5'-triphosphate = RNA(n+1) + diphosphate. Promotes RNA polymerase assembly. Latches the N- and C-terminal regions of the beta' subunit thereby facilitating its interaction with the beta and alpha subunits. The sequence is that of DNA-directed RNA polymerase subunit omega from Rickettsia bellii (strain OSU 85-389).